Here is a 461-residue protein sequence, read N- to C-terminus: Calcitonin gene-related peptide type 1 receptor (461 aa).

An N-terminal signal peptide occupies residues 1 to 22 (MEKKCTLYFLVLLPFFMILVTA). Over 23–139 (ELEESPEDSI…NTHEKVKTAL (117 aa)) the chain is Extracellular. Intrachain disulfides connect Cys-48-Cys-74, Cys-65-Cys-105, and Cys-88-Cys-127. N-linked (GlcNAc...) asparagine glycans are attached at residues Asn-66, Asn-118, and Asn-123. The chain crosses the membrane as a helical span at residues 140 to 164 (NLFYLTIIGHGLSIASLLISLGIFF). Topologically, residues 165–175 (YFKSLSCQRIT) are cytoplasmic. A helical transmembrane segment spans residues 176 to 198 (LHKNLFFSFVCNSVVTIIHLTAV). At 199-209 (ANNQALVATNP) the chain is on the extracellular side. Residues 210–238 (VSCKVSQFIHLYLMGCNYFWMLCEGIYLH) form a helical membrane-spanning segment. Residues 239 to 252 (TLIVVAVFAEKQHL) are Cytoplasmic-facing. The helical transmembrane segment at 253 to 273 (MWYYFLGWGFPLIPACIHAIA) threads the bilayer. The Extracellular portion of the chain corresponds to 274–289 (RSLYYNDNCWISSDTH). Residues 288–289 (TH) form a required for RAMP3 interaction region. Residues 290 to 314 (LLYIIHGPICAALLVNLFFLLNIVR) traverse the membrane as a helical segment. Over 315 to 329 (VLITKLKVTHQAESN) the chain is Cytoplasmic. Residues 330–351 (LYMKAVRATLILVPLLGIEFVL) traverse the membrane as a helical segment. At 352–366 (IPWRPEGKIAEEVYD) the chain is on the extracellular side. Residues 367–387 (YIMHILMHFQGLLVSTIFCFF) form a helical membrane-spanning segment. 2 positions are modified to phosphoserine: Ser-420 and Ser-445.

Belongs to the G-protein coupled receptor 2 family. In terms of assembly, heterodimer of CALCRL and RAMP1; the receptor complex functions as CGRP receptor. Heterodimer of CALCRL and RAMP2 or CALCRL and RAMP3; the complexes function as adrenomedullin receptor. As to expression, predominantly expressed in the lung and heart.

The protein resides in the cell membrane. In terms of biological role, g protein-coupled receptor which specificity is determined by its interaction with receptor-activity-modifying proteins (RAMPs). Together with RAMP1, form the receptor complex for calcitonin-gene-related peptides CALCA/CGRP1 and CALCB/CGRP2. Together with RAMP2 or RAMP3, function as receptor complexes for adrenomedullin (ADM and ADM2). Ligand binding causes a conformation change that triggers signaling via guanine nucleotide-binding proteins (G proteins) and modulates the activity of downstream effectors. Activates cAMP-dependent pathway. This is Calcitonin gene-related peptide type 1 receptor from Homo sapiens (Human).